An 89-amino-acid polypeptide reads, in one-letter code: ATP synthase subunit e, mitochondrial (89 aa).

An N-acetylserine modification is found at Ser-1. A helical membrane pass occupies residues 8 to 25 (YSSLAAGIVYGAYHTYTL).

As to quaternary structure, F-type ATP synthases have 2 components, the catalytic core F(1) and the membrane-embedded component F(0), linked together by a central stalk and a peripheral stalk. The central stalk, also called rotor shaft, is often seen as part of F(1). The peripheral stalk is seen as part of F(0). F(0) contains the membrane channel next to the rotor. F-type ATP synthases form dimers but each monomer functions independently in ATP generation. The dimer consists of 18 different polypeptides: ATP1 (subunit alpha, part of F(1), 3 molecules per monomer), ATP2 (subunit beta, part of F(1), 3 molecules per monomer), ATP3 (subunit gamma, part of the central stalk), ATP4 (subunit b, part of the peripheral stalk), ATP5/OSCP (subunit 5/OSCP, part of the peripheral stalk), ATP6 (subunit a, part of the peripheral stalk), ATP7 (subunit d, part of the peripheral stalk), ATP8 (subunit 8, part of the peripheral stalk), OLI1 (subunit c, part of the rotor, 10 molecules per monomer), ATP14 (subunit h, part of the peripheral stalk), ATP15 (subunit epsilon, part of the central stalk), ATP16 (subunit delta, part of the central stalk), ATP17 (subunit f, part of the peripheral stalk), ATP18 (subunit i/j, part of the peripheral stalk). Dimer-specific subunits are ATP19 (subunit k, at interface between monomers), ATP20 (subunit g, at interface between monomers), TIM11 (subunit e, at interface between monomers). Also contains subunit L.

Its subcellular location is the mitochondrion inner membrane. Mitochondrial membrane ATP synthase (F(1)F(0) ATP synthase or Complex V) produces ATP from ADP in the presence of a proton gradient across the membrane which is generated by electron transport complexes of the respiratory chain. F-type ATP synthases consist of two structural domains, F(1) - containing the extramembraneous catalytic core, and F(0) - containing the membrane proton channel, linked together by a central stalk and a peripheral stalk. During catalysis, ATP synthesis in the catalytic domain of F(1) is coupled via a rotary mechanism of the central stalk subunits to proton translocation. Part of the complex F(0) domain. Minor subunit located with subunit a/ATP6 in the membrane. Together with subunit g/ATP20, probably contributes to membrane curvature at the site of the ATP synthase dimer, ultimately contributing to formation of cristae. The sequence is that of ATP synthase subunit e, mitochondrial from Pichia angusta (Yeast).